Consider the following 338-residue polypeptide: Holliday junction branch migration complex subunit RuvB (338 aa).

The interval 1–182 (MDDRMVDQSQ…FGVHLRLEYY (182 aa)) is large ATPase domain (RuvB-L). ATP is bound by residues leucine 21, arginine 22, glycine 63, lysine 66, threonine 67, threonine 68, 129–131 (EDF), arginine 172, tyrosine 182, and arginine 219. Threonine 67 contributes to the Mg(2+) binding site. A small ATPAse domain (RuvB-S) region spans residues 183 to 253 (KESELKDIII…TTKRALQLLQ (71 aa)). The tract at residues 256 to 338 (DYGLDYIDHK…KNGKRDNFEY (83 aa)) is head domain (RuvB-H). Positions 292, 311, and 316 each coordinate DNA.

Belongs to the RuvB family. As to quaternary structure, homohexamer. Forms an RuvA(8)-RuvB(12)-Holliday junction (HJ) complex. HJ DNA is sandwiched between 2 RuvA tetramers; dsDNA enters through RuvA and exits via RuvB. An RuvB hexamer assembles on each DNA strand where it exits the tetramer. Each RuvB hexamer is contacted by two RuvA subunits (via domain III) on 2 adjacent RuvB subunits; this complex drives branch migration. In the full resolvosome a probable DNA-RuvA(4)-RuvB(12)-RuvC(2) complex forms which resolves the HJ.

It localises to the cytoplasm. It carries out the reaction ATP + H2O = ADP + phosphate + H(+). In terms of biological role, the RuvA-RuvB-RuvC complex processes Holliday junction (HJ) DNA during genetic recombination and DNA repair, while the RuvA-RuvB complex plays an important role in the rescue of blocked DNA replication forks via replication fork reversal (RFR). RuvA specifically binds to HJ cruciform DNA, conferring on it an open structure. The RuvB hexamer acts as an ATP-dependent pump, pulling dsDNA into and through the RuvAB complex. RuvB forms 2 homohexamers on either side of HJ DNA bound by 1 or 2 RuvA tetramers; 4 subunits per hexamer contact DNA at a time. Coordinated motions by a converter formed by DNA-disengaged RuvB subunits stimulates ATP hydrolysis and nucleotide exchange. Immobilization of the converter enables RuvB to convert the ATP-contained energy into a lever motion, pulling 2 nucleotides of DNA out of the RuvA tetramer per ATP hydrolyzed, thus driving DNA branch migration. The RuvB motors rotate together with the DNA substrate, which together with the progressing nucleotide cycle form the mechanistic basis for DNA recombination by continuous HJ branch migration. Branch migration allows RuvC to scan DNA until it finds its consensus sequence, where it cleaves and resolves cruciform DNA. This Staphylococcus carnosus (strain TM300) protein is Holliday junction branch migration complex subunit RuvB.